A 517-amino-acid chain; its full sequence is Putative thymidine phosphorylase (517 aa).

This sequence belongs to the thymidine/pyrimidine-nucleoside phosphorylase family. Type 2 subfamily.

The enzyme catalyses thymidine + phosphate = 2-deoxy-alpha-D-ribose 1-phosphate + thymine. The polypeptide is Putative thymidine phosphorylase (Legionella pneumophila subsp. pneumophila (strain Philadelphia 1 / ATCC 33152 / DSM 7513)).